Consider the following 903-residue polypeptide: HTH-type transcriptional regulator MalT (903 aa).

39–46 is a binding site for ATP; that stretch reads CPAGYGKT. The HTH luxR-type domain maps to 832–897; the sequence is ELIRTSPLTQ…EAVQQAQRLL (66 aa). A DNA-binding region (H-T-H motif) is located at residues 856–875; it reads NDQIANELDVAATTIKTHIR.

It belongs to the MalT family. In terms of assembly, monomer in solution. Oligomerizes to an active state in the presence of the positive effectors ATP and maltotriose.

With respect to regulation, activated by ATP and maltotriose, which are both required for DNA binding. Positively regulates the transcription of the maltose regulon whose gene products are responsible for uptake and catabolism of malto-oligosaccharides. Specifically binds to the promoter region of its target genes, recognizing a short DNA motif called the MalT box. The protein is HTH-type transcriptional regulator MalT of Yersinia pseudotuberculosis serotype O:1b (strain IP 31758).